The sequence spans 445 residues: Histone acetyltransferase of the MYST family 2 (445 aa).

Polar residues predominate over residues 1-23; sequence MGSSANTETNGNAPPPSSNQKPP. A disordered region spans residues 1 to 58; that stretch reads MGSSANTETNGNAPPPSSNQKPPATNGVDGSHPPPPPLTPDQAIIESDPSKKRKMGML. Residues 60-118 form the Tudor-knot domain; that stretch reads LEVGTRVMCRWRDGKHHPVKVIERRRIHNGGQNDYEYYVHYTEFNRRLDEWTQLDQLDL. The MYST-type HAT domain maps to 169–440; sequence TKVKNISTIE…VDASKLIWTP (272 aa). The C2HC MYST-type zinc finger occupies 202-227; it reads LFFCEFCLNFMKRKEQLQRHMRKCDL. N6-acetyllysine; by autocatalysis is present on Lys269. Acetyl-CoA-binding positions include 312 to 314 and 319 to 325; these read ILT and QRKGYGK. The active-site Proton donor/acceptor is the Glu345. Residue Ser349 coordinates acetyl-CoA.

Belongs to the MYST (SAS/MOZ) family. As to quaternary structure, interacts with MRG1 and MRG2. Autoacetylation at Lys-269 is required for proper function. In terms of tissue distribution, expressed in cotyledons, leaves, stems, roots and, at higher levels in developing flowers, particularly in the anthers and gynoecia. Constitutively expressed in all tissues, predominantly in shoot apical meristem.

The protein localises to the nucleus. The enzyme catalyses L-lysyl-[protein] + acetyl-CoA = N(6)-acetyl-L-lysyl-[protein] + CoA + H(+). Its function is as follows. Histone acetyltransferase which may be involved in transcriptional activation. Acetylates 'Lys-5' of histone H4 (H4K5ac). Essential for gametophyte development. Negative regulator of flowering controlling the H4K5ac levels in the FLC chromatin. The sequence is that of Histone acetyltransferase of the MYST family 2 from Arabidopsis thaliana (Mouse-ear cress).